Here is a 254-residue protein sequence, read N- to C-terminus: Ribosomal RNA small subunit methyltransferase G (254 aa).

Residues Gly-84, Phe-89, 136–137 (VE), and Arg-155 contribute to the S-adenosyl-L-methionine site. Positions 231-254 (HLYPRAVGIPSKQPLGIQADDNRS) are disordered.

The protein belongs to the methyltransferase superfamily. RNA methyltransferase RsmG family.

It is found in the cytoplasm. Functionally, specifically methylates the N7 position of a guanine in 16S rRNA. The chain is Ribosomal RNA small subunit methyltransferase G from Synechococcus sp. (strain WH7803).